The primary structure comprises 920 residues: Isoleucine--tRNA ligase (920 aa).

The short motif at 58 to 68 (PYANGHLHLGH) is the 'HIGH' region element. Glutamate 569 contacts L-isoleucyl-5'-AMP. Positions 610–614 (KMSKS) match the 'KMSKS' region motif. ATP is bound at residue lysine 613. 4 residues coordinate Zn(2+): cysteine 895, cysteine 898, cysteine 910, and cysteine 913.

The protein belongs to the class-I aminoacyl-tRNA synthetase family. IleS type 1 subfamily. Monomer. Zn(2+) is required as a cofactor.

The protein resides in the cytoplasm. It catalyses the reaction tRNA(Ile) + L-isoleucine + ATP = L-isoleucyl-tRNA(Ile) + AMP + diphosphate. Its function is as follows. Catalyzes the attachment of isoleucine to tRNA(Ile). As IleRS can inadvertently accommodate and process structurally similar amino acids such as valine, to avoid such errors it has two additional distinct tRNA(Ile)-dependent editing activities. One activity is designated as 'pretransfer' editing and involves the hydrolysis of activated Val-AMP. The other activity is designated 'posttransfer' editing and involves deacylation of mischarged Val-tRNA(Ile). This is Isoleucine--tRNA ligase from Helicobacter pylori (strain Shi470).